A 213-amino-acid chain; its full sequence is Probable transaldolase (213 aa).

The active-site Schiff-base intermediate with substrate is the Lys-83.

This sequence belongs to the transaldolase family. Type 3B subfamily.

Its subcellular location is the cytoplasm. It catalyses the reaction D-sedoheptulose 7-phosphate + D-glyceraldehyde 3-phosphate = D-erythrose 4-phosphate + beta-D-fructose 6-phosphate. It functions in the pathway carbohydrate degradation; pentose phosphate pathway; D-glyceraldehyde 3-phosphate and beta-D-fructose 6-phosphate from D-ribose 5-phosphate and D-xylulose 5-phosphate (non-oxidative stage): step 2/3. Its function is as follows. Transaldolase is important for the balance of metabolites in the pentose-phosphate pathway. The sequence is that of Probable transaldolase from Geobacillus sp. (strain WCH70).